A 294-amino-acid chain; its full sequence is Filamin-B (294 aa).

2 Filamin repeats span residues 1 to 67 and 71 to 163; these read GTRL…KVRV and GQAG…KAKV. Serine 61 and serine 157 each carry phosphoserine. Lysine 160 participates in a covalent cross-link: Glycyl lysine isopeptide (Lys-Gly) (interchain with G-Cter in ISG15). A hinge 2 region spans residues 164-198; sequence TGQRLVGPGSTNETSSILVESVTRSSTETCYSAIP. Positions 164 to 294 are self-association site, tail; sequence TGQRLVGPGS…PGSPFHVTVP (131 aa). Residues serine 173 and serine 184 each carry the phosphoserine modification. The Filamin 24 repeat unit spans residues 199 to 293; that stretch reads KASSDASKVT…IPGSPFHVTV (95 aa). Residues lysine 210 and lysine 216 each carry the N6-succinyllysine modification. Residue lysine 268 is modified to N6-acetyllysine.

This sequence belongs to the filamin family. In terms of assembly, homodimer. Interacts with FLNA, FLNC, INPPL1, ITGB1A, ITGB1D, ITGB3, ITGB6, MYOT, MYOZ1, PSEN1 and PSEN2. Interacts with MICALL2. Interacts with RFLNA and RFLNB. Interacts with HTLV-I viral p13 protein. Interacts with ASB2; the interaction targets FLNB for proteasomal degradation. ISGylation prevents ability to interact with the upstream activators of the JNK cascade and inhibits IFNA-induced JNK signaling. Post-translationally, ubiquitination by a SCF-like complex containing ASB2 leads to proteasomal degradation which promotes muscle differentiation.

The protein resides in the cytoplasm. The protein localises to the cell cortex. It localises to the cytoskeleton. Its subcellular location is the myofibril. It is found in the sarcomere. The protein resides in the z line. Connects cell membrane constituents to the actin cytoskeleton. May promote orthogonal branching of actin filaments and links actin filaments to membrane glycoproteins. Anchors various transmembrane proteins to the actin cytoskeleton. The polypeptide is Filamin-B (FLNB) (Oryctolagus cuniculus (Rabbit)).